The sequence spans 708 residues: C-Jun-amino-terminal kinase-interacting protein 1 (708 aa).

Positions 1 to 26 are disordered; it reads MAERESGLSGGAASPPAASPFLGLHI. A compositionally biased stretch (low complexity) spans 11–24; that stretch reads GAASPPAASPFLGL. A phosphoserine mark is found at Ser14, Ser28, and Ser39. The tract at residues 69–368 is disordered; sequence PPRAGLLSAG…PPRASLSSDT (300 aa). Low complexity predominate over residues 71 to 87; the sequence is RAGLLSAGSSGSAGSRL. Position 103 is a phosphothreonine; by MAPK8, MAPK9 and MAPK10 (Thr103). Acidic residues predominate over residues 105–116; that stretch reads GAEDDEEDDDEL. The JNK-binding domain (JBD) stretch occupies residues 126–282; sequence SKAESGQEPA…EATEEIYLTP (157 aa). At Ser149 the chain carries Phosphoserine. Residues 154–173 form a minimal inhibitory domain (MID) region; the sequence is RPKRPTTLNLFPQVPRSQDT. The span at 159-179 shows a compositional bias: polar residues; sequence TTLNLFPQVPRSQDTLNNNSL. Residues Ser178, Ser184, Ser190, Ser192, and Ser193 each carry the phosphoserine modification. The span at 191-201 shows a compositional bias: polar residues; sequence RSSSPLKTGEQ. Thr202 carries the post-translational modification Phosphothreonine; by MAPK8, MAPK9 and MAPK10. A Phosphoserine modification is found at Ser211. Positions 220–232 are enriched in polar residues; sequence PVPTQDRGTSTDS. Over residues 264–274 the composition is skewed to basic and acidic residues; the sequence is IHYQADVRLEA. The tract at residues 280 to 468 is interaction with MAP3K7; that stretch reads LTPVQRPPDP…NVFMSGRSRS (189 aa). A compositionally biased stretch (polar residues) spans 292 to 308; sequence PTSTFLPPTESRMSVSS. Phosphoserine occurs at positions 308, 325, 327, 337, 352, 363, 366, 404, and 406. Short sequence motifs (D-box) lie at residues 350 to 357 and 361 to 369; these read RGSLGEPP and RASLSSDTS. A Phosphothreonine modification is found at Thr408. Positions 426 to 448 are disordered; it reads EEYEEAPQPRPPTCLSEDSTPDE. 2 positions are modified to phosphoserine: Ser441 and Ser444. Thr445 carries the phosphothreonine modification. 4 positions are modified to phosphoserine: Ser466, Ser468, Ser469, and Ser470. The interval 468–657 is interaction with VRK2; that stretch reads SSSAESFGLF…PKNNKYFGFI (190 aa). The 62-residue stretch at 485–546 folds into the SH3 domain; it reads EHEQTHRAIF…PAYYAIEVTK (62 aa). Residues 558-697 form the PID domain; it reads SDWIDQFRVK…FQQFYKQFVE (140 aa).

This sequence belongs to the JIP scaffold family. In terms of assembly, forms homo- or heterooligomeric complexes. Binds specific components of the JNK signaling pathway namely MAPK8/JNK1, MAPK9/JNK2, MAPK10/JNK3, MAP2K7/MKK7, MAP3K11/MLK3 and DLK1. Also binds the proline-rich domain-containing splice variant of apolipoprotein E receptor 2 (ApoER2). Interacts, via the PID domain, with ARHGEF28. Binds the cytoplasmic tails of LRP1 and LRP2 (Megalin). Binds the TPR motif-containing C-terminal of kinesin light chain, KLC1. Pre-assembled MAPK8IP1 scaffolding complexes are then transported as a cargo of kinesin, to the required subcellular location. Interacts with the cytoplasmic domain of APP. Interacts with DCLK2, VRK2 and MAP3K7/TAK1. Found in a complex with SH3RF1, RAC1, MAP3K11/MLK3, MAP2K7/MKK7 and MAPK8/JNK1. Found in a complex with SH3RF1, RAC2, MAP3K7/TAK1, MAP2K7/MKK7, MAPK8/JNK1 and MAPK9/JNK2. Interacts with SH3RF2. In terms of processing, phosphorylated by MAPK8, MAPK9 and MAPK10. Phosphorylation on Thr-103 is also necessary for the dissociation and activation of MAP3K12. Phosphorylated by VRK2. Hyperphosphorylated during mitosis following activation of stress-activated and MAP kinases. Post-translationally, ubiquitinated. Two preliminary events are required to prime for ubiquitination; phosphorylation and an increased in intracellular calcium concentration. Then, the calcium influx initiates ubiquitination and degradation by the ubiquitin-proteasome pathway. In terms of tissue distribution, highly expressed in brain and pancreatic beta-cells. Weaker expression found in kidney.

It is found in the cytoplasm. Its subcellular location is the perinuclear region. It localises to the nucleus. The protein resides in the endoplasmic reticulum membrane. The protein localises to the mitochondrion membrane. Its function is as follows. The JNK-interacting protein (JIP) group of scaffold proteins selectively mediates JNK signaling by aggregating specific components of the MAPK cascade to form a functional JNK signaling module. Required for JNK activation in response to excitotoxic stress. Cytoplasmic MAPK8IP1 causes inhibition of JNK-regulated activity by retaining JNK in the cytoplasm and thus inhibiting the JNK phosphorylation of c-Jun. May also participate in ApoER2-specific reelin signaling. Directly, or indirectly, regulates GLUT2 gene expression and beta-cell function. Appears to have a role in cell signaling in mature and developing nerve terminals. May function as a regulator of vesicle transport, through interactions with the JNK-signaling components and motor proteins. Functions as an anti-apoptotic protein and whose level seems to influence the beta-cell death or survival response. Acts as a scaffold protein that coordinates with SH3RF1 in organizing different components of the JNK pathway, including RAC1 or RAC2, MAP3K11/MLK3 or MAP3K7/TAK1, MAP2K7/MKK7, MAPK8/JNK1 and/or MAPK9/JNK2 into a functional multiprotein complex to ensure the effective activation of the JNK signaling pathway. Regulates the activation of MAPK8/JNK1 and differentiation of CD8(+) T-cells. In Rattus norvegicus (Rat), this protein is C-Jun-amino-terminal kinase-interacting protein 1 (Mapk8ip1).